We begin with the raw amino-acid sequence, 434 residues long: RNA polymerase II holoenzyme cyclin-like subunit (434 aa).

The Cyclin N-terminal domain occupies 23 to 155 (EARRRVLLLE…LIEEMDSYLL (133 aa)). Positions 248-278 (GSSTNPININNNNNTNTSNNNGTTSTTTTTT) are enriched in low complexity. 3 disordered regions span residues 248–292 (GSST…DNTE), 301–320 (LTKS…DIDN), and 330–362 (QIQN…GQIS). Positions 330–359 (QIQNQTQHQHQESTHNNTSSTNTGRNGING) are enriched in low complexity.

Belongs to the cyclin family. Cyclin C subfamily. As to quaternary structure, component of the SRB8-11 complex, a regulatory module of the Mediator complex.

It localises to the nucleus. Functionally, component of the SRB8-11 complex. The SRB8-11 complex is a regulatory module of the Mediator complex which is itself involved in regulation of basal and activated RNA polymerase II-dependent transcription. The SRB8-11 complex may be involved in the transcriptional repression of a subset of genes regulated by Mediator. It may inhibit the association of the Mediator complex with RNA polymerase II to form the holoenzyme complex. The SRB8-11 complex phosphorylates the C-terminal domain (CTD) of the largest subunit of RNA polymerase II. The sequence is that of RNA polymerase II holoenzyme cyclin-like subunit (SSN8) from Candida albicans (strain SC5314 / ATCC MYA-2876) (Yeast).